Consider the following 139-residue polypeptide: Large ribosomal subunit protein uL16 (139 aa).

Belongs to the universal ribosomal protein uL16 family. In terms of assembly, part of the 50S ribosomal subunit.

Binds 23S rRNA and is also seen to make contacts with the A and possibly P site tRNAs. The sequence is that of Large ribosomal subunit protein uL16 from Treponema pallidum (strain Nichols).